Consider the following 227-residue polypeptide: ATP synthase F(0) complex subunit a (227 aa).

Transmembrane regions (helical) follow at residues 14–34 (FLGI…FPSP), 69–89 (WAMI…LGLL), 98–118 (QLSM…LIGM), 139–159 (IPIL…ALGV), 165–185 (LTAG…MLSI), and 189–209 (IATL…AVAM).

The protein belongs to the ATPase A chain family. Component of the ATP synthase complex composed at least of ATP5F1A/subunit alpha, ATP5F1B/subunit beta, ATP5MC1/subunit c (homooctomer), MT-ATP6/subunit a, MT-ATP8/subunit 8, ATP5ME/subunit e, ATP5MF/subunit f, ATP5MG/subunit g, ATP5MK/subunit k, ATP5MJ/subunit j, ATP5F1C/subunit gamma, ATP5F1D/subunit delta, ATP5F1E/subunit epsilon, ATP5PF/subunit F6, ATP5PB/subunit b, ATP5PD/subunit d, ATP5PO/subunit OSCP. ATP synthase complex consists of a soluble F(1) head domain (subunits alpha(3) and beta(3)) - the catalytic core - and a membrane F(0) domain - the membrane proton channel (subunits c, a, 8, e, f, g, k and j). These two domains are linked by a central stalk (subunits gamma, delta, and epsilon) rotating inside the F1 region and a stationary peripheral stalk (subunits F6, b, d, and OSCP). Interacts with DNAJC30; interaction is direct.

The protein localises to the mitochondrion inner membrane. The catalysed reaction is H(+)(in) = H(+)(out). Subunit a, of the mitochondrial membrane ATP synthase complex (F(1)F(0) ATP synthase or Complex V) that produces ATP from ADP in the presence of a proton gradient across the membrane which is generated by electron transport complexes of the respiratory chain. ATP synthase complex consist of a soluble F(1) head domain - the catalytic core - and a membrane F(1) domain - the membrane proton channel. These two domains are linked by a central stalk rotating inside the F(1) region and a stationary peripheral stalk. During catalysis, ATP synthesis in the catalytic domain of F(1) is coupled via a rotary mechanism of the central stalk subunits to proton translocation. With the subunit c (ATP5MC1), forms the proton-conducting channel in the F(0) domain, that contains two crucial half-channels (inlet and outlet) that facilitate proton movement from the mitochondrial intermembrane space (IMS) into the matrix. Protons are taken up via the inlet half-channel and released through the outlet half-channel, following a Grotthuss mechanism. This is ATP synthase F(0) complex subunit a from Polypterus ornatipinnis (Ornate bichir).